The primary structure comprises 37 residues: Large ribosomal subunit protein bL36c (37 aa).

This sequence belongs to the bacterial ribosomal protein bL36 family.

The protein localises to the plastid. It localises to the chloroplast. This is Large ribosomal subunit protein bL36c from Cyanidioschyzon merolae (strain NIES-3377 / 10D) (Unicellular red alga).